The following is a 589-amino-acid chain: MSVSVHETRKSRSSTGSMNISVFHKASHPDCVLAHLNTLRKHCMFTDVTLWAGDRAFPCHRAVLAASSRYFEAMFSHGLRESRDDTVNFQDNLHPEVLELLLDFAYSSRIVINEENAESLLEAGDMLQFHDVRDAAAEFLEKNLSPSNCLGMMVLSDAHQCRRLYEFSCRMSLVHFETVRQSEDFNSLSRDTLLDLISRDELETEDERVVFEAILQWVKHDLEQRKVHLPLLLRNVRLALLPSDCLKKAVSGEALLMADECTKLIIDEAFRCKTKILLNDGVVTSPFARPRKAGHTLLILGGQTFMCDKIYQVDHKAKEIIPKADLPSPRKEFSASAIGCKVYVTGGRGSENGVSKDVWVYDTVHEEWSKAAPMLIARFGHGSAELENCLYVVGGHTSLAGIFPASPSVSLKQVEKYDPGDNKWTMVAPMRDGVSNAAVVSAKLKLFVFGGTSIHRDMVSKVQCFDPSDNRWTIKAECPQPWRYTAAAVLGSQIFIMGGDTEYTAASAYRFDCETNQWTRIGDMTAKRMSCHAVASGNKLYVVGGYFGTQRCKTLDCYDPTSDTWNCITSVPYSLIPTAFVSTWKHLPA.

A BTB domain is found at 46–114 (TDVTLWAGDR…AYSSRIVINE (69 aa)). In terms of domain architecture, BACK spans 149 to 250 (CLGMMVLSDA…LPSDCLKKAV (102 aa)). Kelch repeat units follow at residues 296–340 (TLLI…AIGC), 341–388 (KVYV…ELEN), 389–444 (CLYV…SAKL), 446–492 (LFVF…VLGS), 493–538 (QIFI…ASGN), and 539–585 (KLYV…STWK).

As to quaternary structure, component of the BCR(KLHL25) E3 ubiquitin ligase complex, at least composed of CUL3, KLHL25 and RBX1.

It participates in protein modification; protein ubiquitination. Its function is as follows. Substrate-specific adapter of a BCR (BTB-CUL3-RBX1) E3 ubiquitin ligase complex involved in various processes, such as translation homeostasis and lipid synthesis. The BCR(KLHL25) ubiquitin ligase complex acts by mediating ubiquitination of hypophosphorylated EIF4EBP1 (4E-BP1): ubiquitination and subsequent degradation of hypophosphorylated EIF4EBP1 (4E-BP1) probably serves as a homeostatic mechanism to maintain translation and prevent eIF4E inhibition when eIF4E levels are low. The BCR(KLHL25) complex does not target EIF4EBP1 (4E-BP1) when it is hyperphosphorylated or associated with eIF4E. The BCR(KLHL25) complex also acts as a regulator of lipid synthesis by mediating ubiquitination and degradation of ACLY, thereby inhibiting lipid synthesis. BCR(KLHL25)-mediated degradation of ACLY promotes fatty acid oxidation and is required for differentiation of inducible regulatory T (iTreg) cells. This chain is Kelch-like protein 25, found in Rattus norvegicus (Rat).